Reading from the N-terminus, the 921-residue chain is uncharacterized protein (921 aa).

The tract at residues 334–628 (MTKRKFLSID…NLKSIYYDFF (295 aa)) is kinase-like. Over residues 401–494 (GSSEWSFGSS…NNNNSDGSSG (94 aa)) the composition is skewed to low complexity. 2 disordered regions span residues 401-499 (GSSE…DNRN) and 664-711 (NLYS…NSNS).

This is an uncharacterized protein from Dictyostelium discoideum (Social amoeba).